Reading from the N-terminus, the 952-residue chain is Isoleucine--tRNA ligase (952 aa).

The 'HIGH' region motif lies at 60 to 70 (PYANGSLHIGH). Glu562 is an L-isoleucyl-5'-AMP binding site. Positions 603 to 607 (KMSKS) match the 'KMSKS' region motif. Residue Lys606 coordinates ATP. Positions 921, 924, 941, and 944 each coordinate Zn(2+).

It belongs to the class-I aminoacyl-tRNA synthetase family. IleS type 1 subfamily. Monomer. Zn(2+) serves as cofactor.

The protein localises to the cytoplasm. It carries out the reaction tRNA(Ile) + L-isoleucine + ATP = L-isoleucyl-tRNA(Ile) + AMP + diphosphate. In terms of biological role, catalyzes the attachment of isoleucine to tRNA(Ile). As IleRS can inadvertently accommodate and process structurally similar amino acids such as valine, to avoid such errors it has two additional distinct tRNA(Ile)-dependent editing activities. One activity is designated as 'pretransfer' editing and involves the hydrolysis of activated Val-AMP. The other activity is designated 'posttransfer' editing and involves deacylation of mischarged Val-tRNA(Ile). This Microcystis aeruginosa (strain NIES-843 / IAM M-2473) protein is Isoleucine--tRNA ligase.